Here is a 395-residue protein sequence, read N- to C-terminus: Dihydroorotate dehydrogenase (quinone), mitochondrial (395 aa).

The N-terminal 10 residues, 1–10 (MAWRHLKKRA), are a transit peptide targeting the mitochondrion; not cleaved. Over 1–10 (MAWRHLKKRA) the chain is Mitochondrial matrix. A helical membrane pass occupies residues 11 to 30 (QDAVIILGGGGLLFASYLMA). The Mitochondrial intermembrane portion of the chain corresponds to 31 to 395 (TGDERFYAEH…TDAIGADHRR (365 aa)). FMN contacts are provided by residues 95 to 99 (AGFDK) and serine 119. Lysine 99 serves as a coordination point for substrate. 144–148 (NRYGF) contacts substrate. Residues asparagine 180 and asparagine 211 each contribute to the FMN site. 211 to 216 (NVSSPN) contributes to the substrate binding site. Serine 214 functions as the Nucleophile in the catalytic mechanism. FMN contacts are provided by lysine 254 and threonine 282. Residue 283 to 284 (NT) coordinates substrate. FMN-binding positions include glycine 305, glycine 334, and 355–356 (YT).

The protein belongs to the dihydroorotate dehydrogenase family. Type 2 subfamily. As to quaternary structure, monomer. FMN serves as cofactor. Post-translationally, the uncleaved transit peptide is required for mitochondrial targeting and proper membrane integration.

It is found in the mitochondrion inner membrane. The catalysed reaction is (S)-dihydroorotate + a quinone = orotate + a quinol. It functions in the pathway pyrimidine metabolism; UMP biosynthesis via de novo pathway; orotate from (S)-dihydroorotate (quinone route): step 1/1. Functionally, catalyzes the conversion of dihydroorotate to orotate with quinone as electron acceptor. Required for UMP biosynthesis via de novo pathway. In Homo sapiens (Human), this protein is Dihydroorotate dehydrogenase (quinone), mitochondrial (DHODH).